The chain runs to 595 residues: Alginate biosynthesis sensor protein KinB (595 aa).

Over Met1–Arg12 the chain is Cytoplasmic. A helical membrane pass occupies residues Leu13–Phe33. The Periplasmic portion of the chain corresponds to Ser34–Arg167. A helical transmembrane segment spans residues Ala168–Val188. The Cytoplasmic portion of the chain corresponds to Thr189–Val595. The 53-residue stretch at Arg195–Lys247 folds into the HAMP domain. In terms of domain architecture, PAS spans Arg258 to Val323. Residues Ala327 to Gln369 enclose the PAC domain. The region spanning Arg382–Val595 is the Histidine kinase domain. Phosphohistidine; by autocatalysis is present on His385.

Autophosphorylated.

It localises to the cell inner membrane. It carries out the reaction ATP + protein L-histidine = ADP + protein N-phospho-L-histidine.. In terms of biological role, member of the two-component regulatory system AlgB/KinB involved in regulation of alginate biosynthesis genes. KinB functions as a membrane-associated protein kinase that phosphorylates AlgB, probably in response to environmental signals. The sequence is that of Alginate biosynthesis sensor protein KinB (kinB) from Pseudomonas aeruginosa.